The following is a 213-amino-acid chain: 3-demethoxyubiquinol 3-hydroxylase (213 aa).

Residues Glu62, Glu92, His95, Glu144, Glu176, and His179 each contribute to the Fe cation site.

Belongs to the COQ7 family. Fe cation is required as a cofactor.

The protein localises to the cell membrane. It carries out the reaction a 5-methoxy-2-methyl-3-(all-trans-polyprenyl)benzene-1,4-diol + AH2 + O2 = a 3-demethylubiquinol + A + H2O. Its pathway is cofactor biosynthesis; ubiquinone biosynthesis. Functionally, catalyzes the hydroxylation of 2-nonaprenyl-3-methyl-6-methoxy-1,4-benzoquinol during ubiquinone biosynthesis. This is 3-demethoxyubiquinol 3-hydroxylase from Legionella pneumophila (strain Corby).